Reading from the N-terminus, the 104-residue chain is Class I hydrophobin 12 (104 aa).

The first 25 residues, 1 to 25, serve as a signal peptide directing secretion; it reads MFSKATLFFTAAVVIVAAGATPTTS. Cystine bridges form between Cys-27–Cys-85, Cys-34–Cys-79, Cys-35–Cys-67, and Cys-86–Cys-99.

Belongs to the fungal hydrophobin family. As to quaternary structure, self-assembles to form functional amyloid fibrils called rodlets. Self-assembly into fibrillar rodlets occurs spontaneously at hydrophobic:hydrophilic interfaces and the rodlets further associate laterally to form amphipathic monolayers.

Its subcellular location is the secreted. It localises to the cell wall. In terms of biological role, aerial growth, conidiation, and dispersal of filamentous fungi in the environment rely upon a capability of their secreting small amphipathic proteins called hydrophobins (HPBs) with low sequence identity. Class I can self-assemble into an outermost layer of rodlet bundles on aerial cell surfaces, conferring cellular hydrophobicity that supports fungal growth, development and dispersal; whereas Class II form highly ordered films at water-air interfaces through intermolecular interactions but contribute nothing to the rodlet structure. Hydph12 is a class I hydrophobin involved in the formation of mycelium knots. This chain is Class I hydrophobin 12, found in Pleurotus ostreatus (strain PC15) (Oyster mushroom).